A 262-amino-acid polypeptide reads, in one-letter code: tRNA (guanine-N(1)-)-methyltransferase (262 aa).

S-adenosyl-L-methionine is bound by residues Gly-113 and 137–142; that span reads IGDYVL.

Belongs to the RNA methyltransferase TrmD family. In terms of assembly, homodimer.

The protein resides in the cytoplasm. The catalysed reaction is guanosine(37) in tRNA + S-adenosyl-L-methionine = N(1)-methylguanosine(37) in tRNA + S-adenosyl-L-homocysteine + H(+). Its function is as follows. Specifically methylates guanosine-37 in various tRNAs. The chain is tRNA (guanine-N(1)-)-methyltransferase from Thermobifida fusca (strain YX).